Here is a 466-residue protein sequence, read N- to C-terminus: Ribulose bisphosphate carboxylase large chain (466 aa).

The residue at position 4 (Lys4) is an N6,N6,N6-trimethyllysine. The substrate site is built by Asn113 and Thr163. Residue Lys165 is the Proton acceptor of the active site. Lys167 is a substrate binding site. The Mg(2+) site is built by Lys191, Asp193, and Glu194. Lys191 is subject to N6-carboxylysine. His284 serves as the catalytic Proton acceptor. Residues Arg285, His317, and Ser369 each coordinate substrate.

This sequence belongs to the RuBisCO large chain family. Type I subfamily. In terms of assembly, heterohexadecamer of 8 large chains and 8 small chains; disulfide-linked. The disulfide link is formed within the large subunit homodimers. Mg(2+) serves as cofactor. In terms of processing, the disulfide bond which can form in the large chain dimeric partners within the hexadecamer appears to be associated with oxidative stress and protein turnover.

It is found in the plastid. Its subcellular location is the chloroplast. The catalysed reaction is 2 (2R)-3-phosphoglycerate + 2 H(+) = D-ribulose 1,5-bisphosphate + CO2 + H2O. It carries out the reaction D-ribulose 1,5-bisphosphate + O2 = 2-phosphoglycolate + (2R)-3-phosphoglycerate + 2 H(+). Functionally, ruBisCO catalyzes two reactions: the carboxylation of D-ribulose 1,5-bisphosphate, the primary event in carbon dioxide fixation, as well as the oxidative fragmentation of the pentose substrate in the photorespiration process. Both reactions occur simultaneously and in competition at the same active site. The protein is Ribulose bisphosphate carboxylase large chain of Justicia odora (Water willow).